Reading from the N-terminus, the 467-residue chain is Cytochrome c-552 (467 aa).

The N-terminal stretch at 1 to 27 (MMKKMTGKSFALSALVAASFMAAGAMA) is a signal peptide. His-87 contributes to the heme c binding site. Residues Cys-115, Cys-118, and Lys-119 each contribute to the heme site. The heme c site is built by Cys-153, Cys-156, His-157, Cys-195, Cys-198, and His-199. Residues Glu-201, Tyr-202, Lys-250, and Gln-252 each coordinate Ca(2+). A substrate-binding site is contributed by Tyr-202. Residue His-253 participates in substrate binding. The heme c site is built by His-264, Cys-271, Cys-274, His-275, His-290, Cys-303, Cys-306, His-307, and His-382.

This sequence belongs to the cytochrome c-552 family. Requires Ca(2+) as cofactor. Heme c serves as cofactor.

The protein resides in the periplasm. It carries out the reaction 6 Fe(III)-[cytochrome c] + NH4(+) + 2 H2O = 6 Fe(II)-[cytochrome c] + nitrite + 8 H(+). Its pathway is nitrogen metabolism; nitrate reduction (assimilation). Its function is as follows. Catalyzes the reduction of nitrite to ammonia, consuming six electrons in the process. In Shewanella sp. (strain W3-18-1), this protein is Cytochrome c-552.